Here is a 597-residue protein sequence, read N- to C-terminus: Lipoprotein LpqB (597 aa).

The first 28 residues, methionine 1–glycine 28, serve as a signal peptide directing secretion. Cysteine 29 is lipidated: N-palmitoyl cysteine. Cysteine 29 carries S-diacylglycerol cysteine lipidation. A compositionally biased stretch (polar residues) spans proline 38 to serine 51. The interval proline 38–proline 58 is disordered.

This sequence belongs to the LpqB lipoprotein family.

The protein resides in the cell membrane. This chain is Lipoprotein LpqB, found in Rhodococcus jostii (strain RHA1).